Here is a 125-residue protein sequence, read N- to C-terminus: Large ribosomal subunit protein bL12 (125 aa).

Belongs to the bacterial ribosomal protein bL12 family. In terms of assembly, homodimer. Part of the ribosomal stalk of the 50S ribosomal subunit. Forms a multimeric L10(L12)X complex, where L10 forms an elongated spine to which 2 to 4 L12 dimers bind in a sequential fashion. Binds GTP-bound translation factors.

Forms part of the ribosomal stalk which helps the ribosome interact with GTP-bound translation factors. Is thus essential for accurate translation. The polypeptide is Large ribosomal subunit protein bL12 (Helicobacter pylori (strain P12)).